We begin with the raw amino-acid sequence, 285 residues long: GTP cyclohydrolase 1 type 2 homolog (285 aa).

A divalent metal cation contacts are provided by histidine 65, histidine 66, aspartate 104, histidine 230, and glutamate 234.

Belongs to the GTP cyclohydrolase I type 2/NIF3 family. Homohexamer.

The polypeptide is GTP cyclohydrolase 1 type 2 homolog (Streptomyces coelicolor (strain ATCC BAA-471 / A3(2) / M145)).